The sequence spans 423 residues: Pre-mRNA-splicing regulator WTAP (423 aa).

A disordered region spans residues 234 to 423 (QQLSQMNQTQ…TSNASAGSVL (190 aa)). Polar residues-rich tracts occupy residues 239–276 (MNQTQGTSSGAGPSRTSPSTASEPSTQSEPANASSSNV), 285–301 (NGPSNGNSSQRGASGSS), 358–377 (DSPTGSETSVTQHSNDTDSN), and 392–404 (TAGTRHSTQNGLD). A compositionally biased stretch (low complexity) spans 405–423 (SSAAAVATNTSNASAGSVL).

This sequence belongs to the fl(2)d family. In terms of assembly, component of the WMM complex, a N6-methyltransferase complex composed of a catalytic subcomplex, named MAC, and of an associated subcomplex, named MACOM. Component of the MACOM subcomplex.

It localises to the nucleus speckle. The protein resides in the nucleus. The protein localises to the nucleoplasm. In terms of biological role, associated component of the WMM complex, a complex that mediates N6-methyladenosine (m6A) methylation of RNAs, a modification that plays a role in the efficiency of mRNA splicing and RNA processing. The chain is Pre-mRNA-splicing regulator WTAP from Danio rerio (Zebrafish).